The chain runs to 403 residues: S-adenosylmethionine synthase (403 aa).

His-17 provides a ligand contact to ATP. Asp-19 is a binding site for Mg(2+). K(+) is bound at residue Glu-45. L-methionine is bound by residues Glu-58 and Gln-104. The tract at residues 104–114 (QSPDIAQGVDT) is flexible loop. ATP is bound by residues 179-181 (DGK), 250-251 (KF), Asp-259, 265-266 (RK), Ala-282, and Lys-286. Asp-259 contributes to the L-methionine binding site. Lys-290 lines the L-methionine pocket.

This sequence belongs to the AdoMet synthase family. As to quaternary structure, homotetramer; dimer of dimers. It depends on Mg(2+) as a cofactor. The cofactor is K(+).

It localises to the cytoplasm. The enzyme catalyses L-methionine + ATP + H2O = S-adenosyl-L-methionine + phosphate + diphosphate. Its pathway is amino-acid biosynthesis; S-adenosyl-L-methionine biosynthesis; S-adenosyl-L-methionine from L-methionine: step 1/1. In terms of biological role, catalyzes the formation of S-adenosylmethionine (AdoMet) from methionine and ATP. The overall synthetic reaction is composed of two sequential steps, AdoMet formation and the subsequent tripolyphosphate hydrolysis which occurs prior to release of AdoMet from the enzyme. The polypeptide is S-adenosylmethionine synthase (Mycobacterium bovis (strain BCG / Pasteur 1173P2)).